The following is a 282-amino-acid chain: Bifunctional protein FolD (282 aa).

Residues 165–167 (GRS), serine 190, and threonine 231 contribute to the NADP(+) site.

This sequence belongs to the tetrahydrofolate dehydrogenase/cyclohydrolase family. Homodimer.

It carries out the reaction (6R)-5,10-methylene-5,6,7,8-tetrahydrofolate + NADP(+) = (6R)-5,10-methenyltetrahydrofolate + NADPH. The catalysed reaction is (6R)-5,10-methenyltetrahydrofolate + H2O = (6R)-10-formyltetrahydrofolate + H(+). It functions in the pathway one-carbon metabolism; tetrahydrofolate interconversion. Functionally, catalyzes the oxidation of 5,10-methylenetetrahydrofolate to 5,10-methenyltetrahydrofolate and then the hydrolysis of 5,10-methenyltetrahydrofolate to 10-formyltetrahydrofolate. In Clostridium botulinum (strain Eklund 17B / Type B), this protein is Bifunctional protein FolD.